The primary structure comprises 232 residues: MSTETMIQDVELAEEALPKTRGPQGSKRRLFLSLFSFLLVAGATALFCLLHFGVIGPQKDELSKDFSLISPLALAVRSSSRIPSDKPVAHVVANPQAEGQLQWLNRRANALLANGVELRDNQLVVPSEGLYLVYSQVLFKGQGCPSNFMLLTHSISRIAVSYQAKVNLLSAIKSPCQRETPQGAKTNPWYEPIYLGGVFQLEKGDRLSAEINLPDYLDLAESGQVYFGIIGL.

Over 1 to 34 (MSTETMIQDVELAEEALPKTRGPQGSKRRLFLSL) the chain is Cytoplasmic. Position 2 is a phosphoserine; by CK1 (Ser-2). Residue Lys-19 is the site of N6-myristoyl lysine attachment. The chain crosses the membrane as a helical; Signal-anchor for type II membrane protein span at residues 35–55 (FSFLLVAGATALFCLLHFGVI). Residues 56 to 232 (GPQKDELSKD…GQVYFGIIGL (177 aa)) lie on the Extracellular side of the membrane. Ser-79 carries an O-linked (GalNAc...) serine; in soluble form glycan. A THD domain is found at 87-232 (PVAHVVANPQ…GQVYFGIIGL (146 aa)). Residues Cys-144 and Cys-176 are joined by a disulfide bond.

Belongs to the tumor necrosis factor family. Homotrimer. Interacts with SPPL2B. Post-translationally, the soluble form derives from the membrane form by proteolytic processing. The membrane-bound form is further proteolytically processed by SPPL2A or SPPL2B through regulated intramembrane proteolysis producing TNF intracellular domains (ICD1 and ICD2) released in the cytosol and TNF C-domain 1 and C-domain 2 secreted into the extracellular space. In terms of processing, the membrane form, but not the soluble form, is phosphorylated on serine residues. Dephosphorylation of the membrane form occurs by binding to soluble TNFRSF1A/TNFR1. O-glycosylated; glycans contain galactose, N-acetylgalactosamine and N-acetylneuraminic acid. Post-translationally, the soluble form is demyristoylated by SIRT6, promoting its secretion.

The protein localises to the cell membrane. It localises to the membrane. Its subcellular location is the secreted. Its function is as follows. Cytokine that binds to TNFRSF1A/TNFR1 and TNFRSF1B/TNFBR. It is mainly secreted by macrophages and can induce cell death of certain tumor cell lines. It is potent pyrogen causing fever by direct action or by stimulation of interleukin-1 secretion and is implicated in the induction of cachexia, Under certain conditions it can stimulate cell proliferation and induce cell differentiation. Induces insulin resistance in adipocytes via inhibition of insulin-induced IRS1 tyrosine phosphorylation and insulin-induced glucose uptake. Induces GKAP42 protein degradation in adipocytes which is partially responsible for TNF-induced insulin resistance. Plays a role in angiogenesis by inducing VEGF production synergistically with IL1B and IL6. Promotes osteoclastogenesis and therefore mediates bone resorption. In terms of biological role, the TNF intracellular domain (ICD) form induces IL12 production in dendritic cells. The sequence is that of Tumor necrosis factor (TNF) from Callithrix jacchus (White-tufted-ear marmoset).